Reading from the N-terminus, the 102-residue chain is Large ribosomal subunit protein bL21 (102 aa).

Belongs to the bacterial ribosomal protein bL21 family. As to quaternary structure, part of the 50S ribosomal subunit. Contacts protein L20.

This protein binds to 23S rRNA in the presence of protein L20. The chain is Large ribosomal subunit protein bL21 from Desulfovibrio desulfuricans (strain ATCC 27774 / DSM 6949 / MB).